A 210-amino-acid polypeptide reads, in one-letter code: Probable GTP-binding protein EngB (210 aa).

An EngB-type G domain is found at 30 to 204 (QGYEVAFAGR…YRVLADWMEL (175 aa)). GTP contacts are provided by residues 38 to 45 (GRSNAGKS), 64 to 68 (GRTQL), 82 to 85 (DLPG), 149 to 152 (TKAD), and 182 to 185 (LFSA). Mg(2+)-binding residues include Ser45 and Thr66.

Belongs to the TRAFAC class TrmE-Era-EngA-EngB-Septin-like GTPase superfamily. EngB GTPase family. Mg(2+) serves as cofactor.

Its function is as follows. Necessary for normal cell division and for the maintenance of normal septation. The sequence is that of Probable GTP-binding protein EngB from Pseudomonas putida (strain ATCC 47054 / DSM 6125 / CFBP 8728 / NCIMB 11950 / KT2440).